Here is a 70-residue protein sequence, read N- to C-terminus: ATP synthase subunit c (70 aa).

The next 2 membrane-spanning stretches (helical) occupy residues 3–23 and 44–64; these read ALAA…IGIA and LFLI…VIAF.

Belongs to the ATPase C chain family. F-type ATPases have 2 components, F(1) - the catalytic core - and F(0) - the membrane proton channel. F(1) has five subunits: alpha(3), beta(3), gamma(1), delta(1), epsilon(1). F(0) has three main subunits: a(1), b(2) and c(10-14). The alpha and beta chains form an alternating ring which encloses part of the gamma chain. F(1) is attached to F(0) by a central stalk formed by the gamma and epsilon chains, while a peripheral stalk is formed by the delta and b chains.

Its subcellular location is the cell membrane. F(1)F(0) ATP synthase produces ATP from ADP in the presence of a proton or sodium gradient. F-type ATPases consist of two structural domains, F(1) containing the extramembraneous catalytic core and F(0) containing the membrane proton channel, linked together by a central stalk and a peripheral stalk. During catalysis, ATP synthesis in the catalytic domain of F(1) is coupled via a rotary mechanism of the central stalk subunits to proton translocation. In terms of biological role, key component of the F(0) channel; it plays a direct role in translocation across the membrane. A homomeric c-ring of between 10-14 subunits forms the central stalk rotor element with the F(1) delta and epsilon subunits. The protein is ATP synthase subunit c of Caldicellulosiruptor bescii (strain ATCC BAA-1888 / DSM 6725 / KCTC 15123 / Z-1320) (Anaerocellum thermophilum).